The sequence spans 252 residues: Ribosomal RNA small subunit methyltransferase J (252 aa).

Residues 101-102, 117-118, 153-154, and Asp-171 each bind S-adenosyl-L-methionine; these read RD, ER, and SS.

The protein belongs to the methyltransferase superfamily. RsmJ family.

The protein resides in the cytoplasm. It catalyses the reaction guanosine(1516) in 16S rRNA + S-adenosyl-L-methionine = N(2)-methylguanosine(1516) in 16S rRNA + S-adenosyl-L-homocysteine + H(+). Functionally, specifically methylates the guanosine in position 1516 of 16S rRNA. In Salmonella schwarzengrund (strain CVM19633), this protein is Ribosomal RNA small subunit methyltransferase J.